Consider the following 310-residue polypeptide: Vomeronasal type-1 receptor 50 (310 aa).

Residues 1–16 (MSKANLLHTDNNMKIT) are Extracellular-facing. The chain crosses the membrane as a helical span at residues 17 to 37 (LFSEVSVGISANSILFVVHLC). Residues 38 to 50 (KLLHENKPKPIDL) are Cytoplasmic-facing. A helical membrane pass occupies residues 51 to 71 (YIAFFSITQLMLLITMGLIAV). Residues 72 to 93 (DMFMPWGRWDSTTCQSLIYLHR) are Extracellular-facing. A disulfide bridge links Cys85 with Cys172. A helical membrane pass occupies residues 94–114 (LLRGLTFCATCLLNVLWTITL). The Cytoplasmic portion of the chain corresponds to 115–134 (SPRSSCLTKFKHKSPHHISG). A helical membrane pass occupies residues 135 to 155 (AFLFFCVLYMSFSSHLLVSII). At 156-193 (ATFNSTSDNFLYVTQSCSILPVSYSRTSILSTMMTMRE) the chain is on the extracellular side. Residue Asn159 is glycosylated (N-linked (GlcNAc...) asparagine). The chain crosses the membrane as a helical span at residues 194–214 (AFLIGLMALSSGYVVVLLWRH). The Cytoplasmic segment spans residues 215–237 (KKQARHLHSTSLSSKASPEQRAT). A helical membrane pass occupies residues 238-258 (STIMLLMGFFVVLYILDTVIF). Over 259 to 269 (QARLKFKDVST) the chain is Extracellular. Residues 270–290 (FFCVKIIISHSYATFSPFVFI) form a helical membrane-spanning segment. Topologically, residues 291-310 (CNDKYMIKFVTSMCGRIVNV) are cytoplasmic.

This sequence belongs to the G-protein coupled receptor 1 family. Expressed in a subset of sensory neurons located in the apical layer of the vomeronasal organ.

It localises to the cell membrane. In terms of biological role, putative pheromone receptor implicated in the regulation of social and reproductive behavior. The protein is Vomeronasal type-1 receptor 50 (Vmn1r50) of Mus musculus (Mouse).